A 152-amino-acid polypeptide reads, in one-letter code: Peptide deformylase (152 aa).

Fe cation contacts are provided by Cys88 and His130. Glu131 is a catalytic residue. His134 provides a ligand contact to Fe cation.

This sequence belongs to the polypeptide deformylase family. Requires Fe(2+) as cofactor.

The enzyme catalyses N-terminal N-formyl-L-methionyl-[peptide] + H2O = N-terminal L-methionyl-[peptide] + formate. Functionally, removes the formyl group from the N-terminal Met of newly synthesized proteins. Requires at least a dipeptide for an efficient rate of reaction. N-terminal L-methionine is a prerequisite for activity but the enzyme has broad specificity at other positions. This is Peptide deformylase from Carboxydothermus hydrogenoformans (strain ATCC BAA-161 / DSM 6008 / Z-2901).